Consider the following 355-residue polypeptide: Adenine deaminase (355 aa).

Residues His-24, His-26, and His-204 each coordinate Zn(2+). The active-site Proton donor is Glu-207. Asp-285 serves as a coordination point for Zn(2+). Asp-286 provides a ligand contact to substrate.

The protein belongs to the metallo-dependent hydrolases superfamily. Adenosine and AMP deaminases family. Adenine deaminase type 2 subfamily. The cofactor is Zn(2+).

It carries out the reaction adenine + H2O + H(+) = hypoxanthine + NH4(+). Catalyzes the hydrolytic deamination of adenine to hypoxanthine. Plays an important role in the purine salvage pathway and in nitrogen catabolism. The sequence is that of Adenine deaminase from Geotalea uraniireducens (strain Rf4) (Geobacter uraniireducens).